The chain runs to 467 residues: Mothers against decapentaplegic homolog 2 (467 aa).

The residue at position 2 (Ser2) is an N-acetylserine. Phosphothreonine; by MAPK3 is present on Thr8. Residues 10–176 (PVVKRLLGWK…YQRVETPVLP (167 aa)) enclose the MH1 domain. N6-acetyllysine is present on Lys19. Zn(2+)-binding residues include Cys74, Cys149, Cys161, and His166. A compositionally biased stretch (polar residues) spans 207 to 217 (PAGIEPQSNYI). Residues 207–251 (PAGIEPQSNYIPETPPPGYISEDGETSDQQLNQSMDTGSPAELSP) are disordered. Position 220 is a phosphothreonine (Thr220). The PY-motif signature appears at 221–225 (PPPGY). Positions 233–243 (SDQQLNQSMDT) are enriched in polar residues. Position 240 is a phosphoserine; by CAMK2 (Ser240). Phosphoserine is present on residues Ser245, Ser250, Ser255, Ser458, Ser460, and Ser464. The region spanning 274–467 (WCSIAYYELN…SPSVRCSSMS (194 aa)) is the MH2 domain. Ser465 and Ser467 each carry phosphoserine; by TGFBR1.

It belongs to the dwarfin/SMAD family. Monomer; in the absence of TGF-beta. Heterodimer; in the presence of TGF-beta. Forms a heterodimer with co-SMAD, SMAD4, in the nucleus to form the transactivation complex SMAD2/SMAD4. Found in a complex with SMAD3 and TRIM33 upon addition of TGF-beta. Identified in a complex that contains at least ZNF451, SMAD2, SMAD3 and SMAD4. Interacts (via the MH2 domain) with ZFYVE9; may form trimers with the SMAD4 co-SMAD. Interacts with TAZ/WWRT1. Interacts with FOXH1. Interacts with SNW1. Interacts with CREB-binding protein (CBP) and EP300. Interacts with SNON. Interacts with ALK4/ACVR1B. Interacts with SKOR1. Interacts with SKOR2. Interacts with PRDM16. Interacts (via MH2 domain) with LEMD3. Interacts with RBPMS. Interacts with WWP1. Interacts (dephosphorylated form, via the MH1 and MH2 domains) with RANBP3 (via its C-terminal R domain); the interaction results in the export of dephosphorylated SMAD3 out of the nucleus and termination of the TGF-beta signaling. Interacts with PDPK1 (via PH domain). Interacts with DAB2; the interactions are enhanced upon TGF-beta stimulation. Interacts with USP15. Interacts with PPP5C. Interacts with LDLRAD4 (via the SMAD interaction motif). Interacts (via MH2 domain) with PMEPA1 (via the SMAD interaction motif). Interacts with ZFHX3. Interacts with ZNF451. Interacts with SMURF2 when phosphorylated on Ser-465/467. Interacts with PPM1A. Interacts with TGF-beta. Interacts with TGFBR1. Interacts with TGIF. Interacts with SMAD3 and TRIM33. Interacts with ZNF580. Interacts with NEDD4L in response to TGF-beta. Interacts with HGS. Interacts with AIP1. Interacts with WWP1. Interacts with PML. Interacts weakly with ZNF8. Interacts (when phosphorylated) with RNF111; RNF111 acts as an enhancer of the transcriptional responses by mediating ubiquitination and degradation of SMAD2 inhibitors. Interacts with YAP1 (when phosphorylated at 'Ser-127'). Interacts when phosphorylated with IPO7; the interaction facilitates translocation of SMAD2 to the nucleus. Interacts with MTMR4; negatively regulates TGF-beta signaling through SMAD2 dephosphorylation and retention in endosomes. Phosphorylated on one or several of Thr-220, Ser-245, Ser-250, and Ser-255. In response to TGF-beta, phosphorylated on Ser-465/467 by TGF-beta and activin type 1 receptor kinases. TGF-beta-induced Ser-465/467 phosphorylation declines progressively in a KMT5A-dependent manner. Able to interact with SMURF2 when phosphorylated on Ser-465/467, recruiting other proteins, such as SNON, for degradation. In response to decorin, the naturally occurring inhibitor of TGF-beta signaling, phosphorylated on Ser-240 by CaMK2. Phosphorylated by MAPK3 upon EGF stimulation; which increases transcriptional activity and stability, and is blocked by calmodulin. Phosphorylated by PDPK1. In terms of processing, in response to TGF-beta, ubiquitinated by NEDD4L; which promotes its degradation. Monoubiquitinated, leading to prevent DNA-binding. Deubiquitination by USP15 alleviates inhibition and promotes activation of TGF-beta target genes. Ubiquitinated by RNF111, leading to its degradation: only SMAD2 proteins that are 'in use' are targeted by RNF111, RNF111 playing a key role in activating SMAD2 and regulating its turnover. Post-translationally, acetylated on Lys-19 by coactivators in response to TGF-beta signaling, which increases transcriptional activity. Isoform short: Acetylation increases DNA binding activity in vitro and enhances its association with target promoters in vivo. Acetylation in the nucleus by EP300 is enhanced by TGF-beta. In terms of tissue distribution, expressed at high levels in skeletal muscle, endothelial cells, heart and placenta.

The protein localises to the cytoplasm. It is found in the nucleus. Functionally, receptor-regulated SMAD (R-SMAD) that is an intracellular signal transducer and transcriptional modulator activated by TGF-beta (transforming growth factor) and activin type 1 receptor kinases. Binds the TRE element in the promoter region of many genes that are regulated by TGF-beta and, on formation of the SMAD2/SMAD4 complex, activates transcription. Promotes TGFB1-mediated transcription of odontoblastic differentiation genes in dental papilla cells. Positively regulates PDPK1 kinase activity by stimulating its dissociation from the 14-3-3 protein YWHAQ which acts as a negative regulator. May act as a tumor suppressor in colorectal carcinoma. The sequence is that of Mothers against decapentaplegic homolog 2 (SMAD2) from Homo sapiens (Human).